A 476-amino-acid chain; its full sequence is RNA-binding protein 45 (476 aa).

Residues 1 to 14 (MDDAGGLGGSGGFR) show a composition bias toward gly residues. Residues 1–20 (MDDAGGLGGSGGFRPGVDSL) are disordered. 2 consecutive RRM domains span residues 26 to 106 (SRIF…IAQS) and 121 to 192 (TRIF…LAEP). Lysine 34 participates in a covalent cross-link: Glycyl lysine isopeptide (Lys-Gly) (interchain with G-Cter in SUMO2). The disordered stretch occupies residues 192–212 (PKNKVSGSPEQDDYSSGRQEA). Over residues 196 to 209 (VSGSPEQDDYSSGR) the composition is skewed to polar residues. Phosphoserine is present on residues serine 199 and serine 464. The RRM 3 domain maps to 392–464 (ERLFVVFNPH…VRLKVMLADS (73 aa)).

The protein localises to the cytoplasm. It localises to the nucleus. Functionally, RNA-binding protein with binding specificity for poly(C). May play an important role in neural development. This is RNA-binding protein 45 (Rbm45) from Mus musculus (Mouse).